A 305-amino-acid polypeptide reads, in one-letter code: Ornithine carbamoyltransferase (305 aa).

Residues 52 to 55 (STRT), glutamine 79, arginine 103, and 130 to 133 (HPCQ) contribute to the carbamoyl phosphate site. L-ornithine contacts are provided by residues asparagine 161, aspartate 222, and 226-227 (SM). Carbamoyl phosphate is bound by residues 262 to 263 (CL) and arginine 290.

This sequence belongs to the aspartate/ornithine carbamoyltransferase superfamily. OTCase family.

It is found in the cytoplasm. The catalysed reaction is carbamoyl phosphate + L-ornithine = L-citrulline + phosphate + H(+). It participates in amino-acid biosynthesis; L-arginine biosynthesis; L-arginine from L-ornithine and carbamoyl phosphate: step 1/3. Reversibly catalyzes the transfer of the carbamoyl group from carbamoyl phosphate (CP) to the N(epsilon) atom of ornithine (ORN) to produce L-citrulline. In Pelobacter propionicus (strain DSM 2379 / NBRC 103807 / OttBd1), this protein is Ornithine carbamoyltransferase.